Reading from the N-terminus, the 130-residue chain is Small ribosomal subunit protein uS4 (130 aa).

The residue at position 64 (lysine 64) is an N6-acetyllysine. Residue lysine 91 forms a Glycyl lysine isopeptide (Lys-Gly) (interchain with G-Cter in SUMO2) linkage. In terms of domain architecture, S4 RNA-binding spans 106 to 130 (RRLQTQVFKLGLAXSIHHXRVLIRQ). Lysine 114 carries the N6-acetyllysine modification.

This sequence belongs to the universal ribosomal protein uS4 family. In terms of assembly, component of the small ribosomal subunit. Identified in a IGF2BP1-dependent mRNP granule complex containing untranslated mRNAs. Part of the small subunit (SSU) processome, composed of more than 70 proteins and the RNA chaperone small nucleolar RNA (snoRNA) U3.

The protein resides in the cytoplasm. The protein localises to the nucleus. It is found in the nucleolus. Component of the small ribosomal subunit. The ribosome is a large ribonucleoprotein complex responsible for the synthesis of proteins in the cell. Part of the small subunit (SSU) processome, first precursor of the small eukaryotic ribosomal subunit. During the assembly of the SSU processome in the nucleolus, many ribosome biogenesis factors, an RNA chaperone and ribosomal proteins associate with the nascent pre-rRNA and work in concert to generate RNA folding, modifications, rearrangements and cleavage as well as targeted degradation of pre-ribosomal RNA by the RNA exosome. The protein is Small ribosomal subunit protein uS4 (RPS9) of Sus scrofa (Pig).